A 146-amino-acid polypeptide reads, in one-letter code: Protein STIG1 (146 aa).

Positions methionine 1–serine 23 are cleaved as a signal peptide. Residues asparagine 31, asparagine 61, and asparagine 84 are each glycosylated (N-linked (GlcNAc...) asparagine).

This sequence belongs to the STIG1 family. In terms of processing, glycosylated. In terms of tissue distribution, expressed exclusively in the stigmatic secretory zone.

It localises to the secreted. Functionally, involved in the temporal regulation of the exudate secretion onto the stigma. The protein is Protein STIG1 of Nicotiana tabacum (Common tobacco).